A 215-amino-acid polypeptide reads, in one-letter code: MSKVYDWFEERLEIQAIADDITSKYVPPHVNIFYCLGGITLTCFLVQVATGFAMTFYYRPTVTEAFASVQYIMTEANFGWLIRSVHRWSASMMVLMMILHVFRVYLTGGFKKPRELTWVTGVVLGVLTASFGVTGYSLPWDQIGYWAVKIVTGVPDAIPVIGSPLVELLRGSASVGQSTLTRFYSLHTFVLPLLTAVFMLMHFLMIRKQGISGPL.

Residues 32–52 traverse the membrane as a helical segment; sequence IFYCLGGITLTCFLVQVATGF. C35 provides a ligand contact to heme c. Heme b-binding residues include H86 and H100. A run of 3 helical transmembrane segments spans residues 90–110, 116–136, and 186–206; these read ASMM…TGGF, LTWV…VTGY, and LHTF…FLMI. Heme b-binding residues include H187 and H202.

Belongs to the cytochrome b family. PetB subfamily. In terms of assembly, the 4 large subunits of the cytochrome b6-f complex are cytochrome b6, subunit IV (17 kDa polypeptide, PetD), cytochrome f and the Rieske protein, while the 4 small subunits are PetG, PetL, PetM and PetN. The complex functions as a dimer. Requires heme b as cofactor. Heme c is required as a cofactor.

It localises to the plastid. The protein localises to the chloroplast thylakoid membrane. In terms of biological role, component of the cytochrome b6-f complex, which mediates electron transfer between photosystem II (PSII) and photosystem I (PSI), cyclic electron flow around PSI, and state transitions. The sequence is that of Cytochrome b6 from Arabidopsis thaliana (Mouse-ear cress).